The primary structure comprises 311 residues: Methionyl-tRNA formyltransferase (311 aa).

Position 110–113 (Ser-110–Pro-113) interacts with (6S)-5,6,7,8-tetrahydrofolate.

This sequence belongs to the Fmt family.

The catalysed reaction is L-methionyl-tRNA(fMet) + (6R)-10-formyltetrahydrofolate = N-formyl-L-methionyl-tRNA(fMet) + (6S)-5,6,7,8-tetrahydrofolate + H(+). Functionally, attaches a formyl group to the free amino group of methionyl-tRNA(fMet). The formyl group appears to play a dual role in the initiator identity of N-formylmethionyl-tRNA by promoting its recognition by IF2 and preventing the misappropriation of this tRNA by the elongation apparatus. In Streptococcus pneumoniae (strain P1031), this protein is Methionyl-tRNA formyltransferase.